Here is a 228-residue protein sequence, read N- to C-terminus: uncharacterized protein (228 aa).

S-adenosyl-L-methionine is bound by residues G179, I199, and L208.

This sequence belongs to the class IV-like SAM-binding methyltransferase superfamily. RNA methyltransferase TrmH family.

This is an uncharacterized protein from Borreliella burgdorferi (strain ATCC 35210 / DSM 4680 / CIP 102532 / B31) (Borrelia burgdorferi).